The sequence spans 140 residues: Sex-regulated protein janus-B (140 aa).

Arg-42 contributes to the substrate binding site. His-69 (proton acceptor) is an active-site residue. Residue 110–112 (SRT) coordinates substrate.

Belongs to the janus family.

Functionally, janA and janB regulate somatic sex differentiation. The chain is Sex-regulated protein janus-B (janB) from Drosophila teissieri (Fruit fly).